The following is a 347-amino-acid chain: Phosphate acyltransferase (347 aa).

Belongs to the PlsX family. In terms of assembly, homodimer. Probably interacts with PlsY.

It is found in the cytoplasm. The enzyme catalyses a fatty acyl-[ACP] + phosphate = an acyl phosphate + holo-[ACP]. It participates in lipid metabolism; phospholipid metabolism. Its function is as follows. Catalyzes the reversible formation of acyl-phosphate (acyl-PO(4)) from acyl-[acyl-carrier-protein] (acyl-ACP). This enzyme utilizes acyl-ACP as fatty acyl donor, but not acyl-CoA. The chain is Phosphate acyltransferase from Lawsonia intracellularis (strain PHE/MN1-00).